We begin with the raw amino-acid sequence, 263 residues long: MKNKNVIQKMREKTPLIHCITNYVTINDCANILLSFGASPAMCEAYDEVYDFVSISSALYINLGTLTKEQETAAVLASISAKNHNVPVVIDPVGCPAIKRKVEVINRIAEVGRIDIIKGNIGEIKFLAGMDSETRGVDSLDNGENALDACTQLAKKYNCIVAATGEKDFVSDGKRGSVIKNGTEMLTKVTGAGCMLGALCAATCANFEDKLVSTTAAILSMNIAGEKAYEEAQLPGSFRIALIDNIYMISDEEIWERGNVEWK.

M42 provides a ligand contact to substrate. Residues K118 and T164 each coordinate ATP. G191 serves as a coordination point for substrate.

This sequence belongs to the Thz kinase family. Mg(2+) serves as cofactor.

It carries out the reaction 5-(2-hydroxyethyl)-4-methylthiazole + ATP = 4-methyl-5-(2-phosphooxyethyl)-thiazole + ADP + H(+). It functions in the pathway cofactor biosynthesis; thiamine diphosphate biosynthesis; 4-methyl-5-(2-phosphoethyl)-thiazole from 5-(2-hydroxyethyl)-4-methylthiazole: step 1/1. Catalyzes the phosphorylation of the hydroxyl group of 4-methyl-5-beta-hydroxyethylthiazole (THZ). This Clostridium botulinum (strain ATCC 19397 / Type A) protein is Hydroxyethylthiazole kinase 1.